The chain runs to 360 residues: Probable nuclear hormone receptor HR38 (360 aa).

The tract at residues 1 to 21 is disordered; sequence GSSSPGVAPADNTGPRAAPSS. Residues 23 to 98 constitute a DNA-binding region (nuclear receptor); that stretch reads SQLCAVCGDT…VGMVKEVVRT (76 aa). 2 consecutive NR C4-type zinc fingers follow at residues 26 to 46 and 62 to 86; these read CAVCGDTAACQHYGVRTCEGC and CLAEKSCPVDKRRRNRCQFCWFQKC. In terms of domain architecture, NR LBD spans 122 to 357; that stretch reads PPISLITALV…PLIENMFRAS (236 aa).

It belongs to the nuclear hormone receptor family. NR4 subfamily. Forms a heterodimer with USP.

The protein resides in the nucleus. The chain is Probable nuclear hormone receptor HR38 (HR38) from Bombyx mori (Silk moth).